Here is an 81-residue protein sequence, read N- to C-terminus: Short neurotoxin 1 (81 aa).

The first 21 residues, 1–21 (MKTLLLTLVVVTIVCLDLGYT), serve as a signal peptide directing secretion. 4 disulfide bridges follow: cysteine 24–cysteine 43, cysteine 38–cysteine 60, cysteine 62–cysteine 73, and cysteine 74–cysteine 79.

This sequence belongs to the three-finger toxin family. Short-chain subfamily. Type I alpha-neurotoxin sub-subfamily. As to expression, expressed by the venom gland.

The protein resides in the secreted. Functionally, binds to muscle nicotinic acetylcholine receptor (nAChR) and inhibit acetylcholine from binding to the receptor, thereby impairing neuromuscular transmission. This is Short neurotoxin 1 from Cryptophis nigrescens (Eastern small-eyed snake).